The primary structure comprises 300 residues: 2-keto-3-deoxy-L-fuconate dehydrogenase (300 aa).

NAD(+)-binding positions include 63 to 90 and aspartate 112; that span reads LITA…IATD. Arginine 198 lines the substrate pocket. The Proton acceptor role is filled by tyrosine 201. NAD(+)-binding positions include lysine 205 and 234 to 238; that span reads IKTPS. Substrate is bound by residues arginine 242 and arginine 260.

It belongs to the short-chain dehydrogenases/reductases (SDR) family.

Its function is as follows. Plays a role in the catabolism of L-fucose. Catalyzes the NAD(+)-dependent oxidation of 2-keo-3-deoxy-L-fuconate to 2,4-diketo-3-deoxy-L-fuconate. This is 2-keto-3-deoxy-L-fuconate dehydrogenase from Xanthomonas campestris pv. campestris (strain ATCC 33913 / DSM 3586 / NCPPB 528 / LMG 568 / P 25).